The chain runs to 480 residues: UDP-glucose 6-dehydrogenase 4 (480 aa).

Residues 8–13 (GAGYVG), aspartate 33, arginine 38, 86–90 (VNTPT), 127–128 (ST), and glutamate 161 each bind NAD(+). Substrate is bound by residues 157–161 (EFLAE), 216–223 (KLAANAFL), and 256–269 (RIGP…VGFG). Catalysis depends on cysteine 272, which acts as the Nucleophile. NAD(+) is bound at residue 272–275 (CFQK). Residue 334–335 (FK) coordinates substrate. Arginine 342 is a binding site for NAD(+). Position 393 is a phosphoserine (serine 393). Residue arginine 447 participates in substrate binding.

Belongs to the UDP-glucose/GDP-mannose dehydrogenase family.

The enzyme catalyses UDP-alpha-D-glucose + 2 NAD(+) + H2O = UDP-alpha-D-glucuronate + 2 NADH + 3 H(+). The protein operates within nucleotide-sugar biosynthesis; UDP-alpha-D-glucuronate biosynthesis; UDP-alpha-D-glucuronate from UDP-alpha-D-glucose: step 1/1. Functionally, involved in the biosynthesis of UDP-glucuronic acid (UDP-GlcA), providing nucleotide sugars for cell-wall polymers. In Oryza sativa subsp. japonica (Rice), this protein is UDP-glucose 6-dehydrogenase 4 (UGD4).